The sequence spans 506 residues: Transforming growth factor beta-1-induced transcript 1 protein (506 aa).

The short motif at 3–15 (DLDALLADLQITT) is the LD motif 1 element. The interval 15 to 62 (TPPRCPVLLTDSPEKPQPTETRPPPPPYDPKTAMSNKTSDHETFPVDK) is disordered. Positions 52–62 (TSDHETFPVDK) are enriched in basic and acidic residues. Short sequence motifs (LD motif) lie at residues 87-99 (ELDRLLNELNATQ) and 139-150 (ELDRLMASLSDF). Disordered stretches follow at residues 154 to 201 (NTVS…PTPK) and 221 to 244 (SDEVTASRVPDSVSGSKVPEATSV). Over residues 168–177 (GSEEVSRPGD) the composition is skewed to basic and acidic residues. Positions 248-260 (DLDSMLVKLQSGL) match the LD motif 4 motif. LIM zinc-binding domains are found at residues 271-330 (GLCE…LYAP), 331-388 (RCAL…RLFG), 389-448 (AVCA…RRGS), and 449-506 (LCAG…RLYG).

It belongs to the paxillin family. In terms of assembly, interacts with tcf3 and tcf7l2.

The protein resides in the cell junction. The protein localises to the focal adhesion. Its subcellular location is the nucleus matrix. It localises to the cytoplasm. It is found in the cytoskeleton. Its function is as follows. Functions as a molecular adapter coordinating multiple protein-protein interactions at the focal adhesion complex and in the nucleus. May regulate both Wnt and steroid signaling pathways and play a role in the processes of cell growth, proliferation, migration, differentiation and senescence. May have a zinc-dependent DNA-binding activity. The polypeptide is Transforming growth factor beta-1-induced transcript 1 protein (tgfb1i1) (Xenopus laevis (African clawed frog)).